Consider the following 217-residue polypeptide: UPF0502 protein KPN78578_10500 (217 aa).

This sequence belongs to the UPF0502 family.

This Klebsiella pneumoniae subsp. pneumoniae (strain ATCC 700721 / MGH 78578) protein is UPF0502 protein KPN78578_10500.